A 255-amino-acid polypeptide reads, in one-letter code: Glutamate racemase (255 aa).

Substrate is bound by residues 7–8 (DS) and 39–40 (YG). Cysteine 70 acts as the Proton donor/acceptor in catalysis. Position 71 to 72 (71 to 72 (NT)) interacts with substrate. The Proton donor/acceptor role is filled by cysteine 181. A substrate-binding site is contributed by 182–183 (TH).

Belongs to the aspartate/glutamate racemases family.

It catalyses the reaction L-glutamate = D-glutamate. The protein operates within cell wall biogenesis; peptidoglycan biosynthesis. Its function is as follows. Provides the (R)-glutamate required for cell wall biosynthesis. This Helicobacter pylori (strain Shi470) protein is Glutamate racemase.